A 227-amino-acid polypeptide reads, in one-letter code: 2,3-bisphosphoglycerate-dependent phosphoglycerate mutase (227 aa).

Substrate is bound by residues 7–14 (RHGFSEWN), 20–21 (TG), Arg-59, 86–89 (ERHY), Lys-97, 113–114 (RR), and 182–183 (GN). His-8 (tele-phosphohistidine intermediate) is an active-site residue. The active-site Proton donor/acceptor is the Glu-86.

The protein belongs to the phosphoglycerate mutase family. BPG-dependent PGAM subfamily. As to quaternary structure, homodimer.

The enzyme catalyses (2R)-2-phosphoglycerate = (2R)-3-phosphoglycerate. Its pathway is carbohydrate degradation; glycolysis; pyruvate from D-glyceraldehyde 3-phosphate: step 3/5. Functionally, catalyzes the interconversion of 2-phosphoglycerate and 3-phosphoglycerate. The chain is 2,3-bisphosphoglycerate-dependent phosphoglycerate mutase from Histophilus somni (strain 129Pt) (Haemophilus somnus).